Consider the following 602-residue polypeptide: Auxin response factor 18 (602 aa).

The TF-B3 DNA-binding region spans Phe-128 to Ala-230. Residues Thr-359–Pro-396 form a disordered region. The segment covering Ser-360 to Ser-371 has biased composition (polar residues). A PB1 domain is found at Arg-489–Lys-581.

This sequence belongs to the ARF family. Homodimers and heterodimers.

The protein resides in the nucleus. Functionally, auxin response factors (ARFs) are transcriptional factors that bind specifically to the DNA sequence 5'-TGTCTC-3' found in the auxin-responsive promoter elements (AuxREs). Could act as transcriptional activator or repressor. Formation of heterodimers with Aux/IAA proteins may alter their ability to modulate early auxin response genes expression. This is Auxin response factor 18 (ARF18) from Arabidopsis thaliana (Mouse-ear cress).